The sequence spans 260 residues: Serine protease VLSP-1 (260 aa).

Residues 1 to 18 (MVLIRVLANLLVLHLSYA) form the signal peptide. Residues 19–24 (QKSSEL) constitute a propeptide that is removed on maturation. The region spanning 25-251 (VIGGDECNIN…YSDWIQSIIA (227 aa)) is the Peptidase S1 domain. 6 cysteine pairs are disulfide-bonded: cysteine 31/cysteine 165, cysteine 52/cysteine 68, cysteine 100/cysteine 258, cysteine 144/cysteine 212, cysteine 176/cysteine 191, and cysteine 202/cysteine 227. An N-linked (GlcNAc...) asparagine glycan is attached at asparagine 44. The active-site Charge relay system is the histidine 67. N-linked (GlcNAc...) asparagine glycosylation occurs at asparagine 103. Catalysis depends on aspartate 112, which acts as the Charge relay system. A glycan (N-linked (GlcNAc...) asparagine) is linked at asparagine 156. The active-site Charge relay system is serine 206.

Belongs to the peptidase S1 family. Snake venom subfamily. Expressed by the venom gland.

It localises to the secreted. Its function is as follows. Snake venom serine protease that may act in the hemostasis system of the prey. The sequence is that of Serine protease VLSP-1 from Macrovipera lebetinus (Levantine viper).